Reading from the N-terminus, the 149-residue chain is Large ribosomal subunit protein uL15 (149 aa).

A disordered region spans residues 1–53; that stretch reads MRLHTLQPAPGAKSTRKRVGRGTSSGHGKTSGFGHKGQKARSGRVGKRGFEGG. The span at 23–35 shows a compositional bias: gly residues; sequence TSSGHGKTSGFGH. Residues 36 to 47 are compositionally biased toward basic residues; it reads KGQKARSGRVGK.

This sequence belongs to the universal ribosomal protein uL15 family. In terms of assembly, part of the 50S ribosomal subunit.

In terms of biological role, binds to the 23S rRNA. This Coprothermobacter proteolyticus (strain ATCC 35245 / DSM 5265 / OCM 4 / BT) protein is Large ribosomal subunit protein uL15.